A 6631-amino-acid chain; its full sequence is Replicase polyprotein 1ab (6631 aa).

Topologically, residues 1–1752 (MASSLKQGVS…VSSYKIVLCK (1752 aa)) are cytoplasmic. Ubiquitin-like domains are found at residues 675–780 (KTVT…RDYE) and 1177–1229 (CKQK…ILFI). A Macro domain is found at 1005 to 1181 (VKPATCEKPK…YFDATCKQKT (177 aa)). The Peptidase C16 domain maps to 1238-1499 (EYYGLDAQKY…AKVVKEDVSN (262 aa)). Cys-1276 acts as the For PL-PRO activity in catalysis. The C4-type; degenerate zinc-finger motif lies at 1355 to 1392 (CNCGVKSYELRGLEACIQPVRAPNLLHFKTQYSNCPTC). Catalysis depends on for PL-PRO activity residues His-1439 and Asp-1450. A helical membrane pass occupies residues 1753–1773 (VVFATLLIVWFIYTSNPVVFT). Residues 1753–1866 (VVFATLLIVW…KPVAGFVIIC (114 aa)) are HD1. The 3Ecto domain maps to 1771–1835 (VFTGIRVLDF…AYSVEQIYKD (65 aa)). Residues 1774-1845 (GIRVLDFLFE…AASGINFNWN (72 aa)) lie on the Lumenal side of the membrane. Cystine bridges form between Cys-1787–Cys-1813 and Cys-1804–Cys-1810. The chain crosses the membrane as a helical span at residues 1846 to 1866 (WLYLVFLILFVKPVAGFVIIC). Residues 1867-2282 (YCVKYLVLSS…TFKWFMSCFK (416 aa)) lie on the Cytoplasmic side of the membrane. A Y1 region spans residues 1913 to 2003 (YVQVHHILYC…KLKRHVKPTA (91 aa)). A CoV Nsp3 Y domain is found at 1913–2265 (YVQVHHILYC…HTQKLLVEKK (353 aa)). Zn(2+) is bound by residues His-1917, Cys-1922, Cys-1927, Cys-1930, Cys-1963, His-1966, Cys-1970, and Cys-1973. The tract at residues 1917–1930 (HHILYCKDVTCEVC) is ZF1. Positions 1963 to 1973 (CKRHNWYCRNC) are ZF2. The interval 2004 to 2106 (YAYHVVYEAC…ILDQALYEQL (103 aa)) is Y2. The segment at 2004–2265 (YAYHVVYEAC…HTQKLLVEKK (262 aa)) is coV-Y. Positions 2107 to 2165 (IVEPVSKSVIDKVCSILSNIISVDTAALNYKAGTLRDALLSITKDEEAVDMAIFCHNHE) are Y3. The tract at residues 2166–2265 (VEYTGDGFTN…HTQKLLVEKK (100 aa)) is Y4. The helical transmembrane segment at 2283–2303 (WLFVFYILFTACCLGYYYMEM) threads the bilayer. An HD2 region spans residues 2283–2666 (WLFVFYILFT…LACCYLGFIL (384 aa)). At 2304–2561 (NKSFVHPMYD…FFTGVNPNIY (258 aa)) the chain is on the lumenal side. Residues 2562-2582 (IQLATMFLILVVIVLIFAMVI) form a helical membrane-spanning segment. Topologically, residues 2583–2613 (KFQGVFKAYATIVFTIMLVWVINAFVLCVHS) are cytoplasmic. A helical membrane pass occupies residues 2614–2634 (YNSVLAVILLVLYCYASMVTS). Topologically, residues 2635 to 2645 (RNTAIIMHCWL) are lumenal. A helical membrane pass occupies residues 2646–2666 (VFTFGLIVPTWLACCYLGFIL). The Cytoplasmic segment spans residues 2667-3098 (YMYTPLVFWC…SSFVRKATSW (432 aa)). One can recognise a Nsp4C domain in the interval 2686–2781 (LYDGNEFVGN…RYSIGVSRLQ (96 aa)). The 307-residue stretch at 2782-3088 (AGFKKLVSPS…FNQVGGVRLQ (307 aa)) folds into the Peptidase C30 domain. Catalysis depends on for 3CL-PRO activity residues His-2822 and Cys-2924. A helical membrane pass occupies residues 3099–3119 (FWSRCVLACFLFVLCAIVLFT). Residues 3099–3319 (FWSRCVLACF…WLCTCYFGLY (221 aa)) are HD3. Over 3120 to 3123 (AVPL) the chain is Lumenal. The chain crosses the membrane as a helical span at residues 3124 to 3144 (KFYVHAAVILLMAVLFISFTV). Over 3145–3153 (KHVMAYMDT) the chain is Cytoplasmic. Residues 3154–3174 (FLLPTLITVIIGVCAEVPFIY) form a helical membrane-spanning segment. Residues 3175 to 3190 (NTLISQVVIFLSQWYD) are Lumenal-facing. Residues 3191–3211 (PVVFDTMVPWMLLPLVLYTAF) form a helical membrane-spanning segment. Topologically, residues 3212-3259 (KCVQGCYMNSFNTSLLMLYQFMKLGFVIYTSSNTLTAYTEGNWELFFE) are cytoplasmic. A helical transmembrane segment spans residues 3260 to 3280 (LVHTIVLANVSSNSLIGLIVF). Residues 3281 to 3298 (KCAKWMLYYCNATYFNNY) lie on the Lumenal side of the membrane. Residues 3299–3319 (VLMAVMVNGIGWLCTCYFGLY) traverse the membrane as a helical segment. Residues 3320–6631 (WWVNKVFGLT…FTSDSFVCTM (3312 aa)) are Cytoplasmic-facing. The region spanning 3382-3464 (SKLSDVKCTT…DILKRSTVLQ (83 aa)) is the RdRp Nsp7 cofactor domain. The region spanning 3465–3674 (SVTQEFSHIP…GHNKVDVALQ (210 aa)) is the RdRp Nsp8 cofactor domain. In terms of domain architecture, Nsp9 ssRNA-binding spans 3675 to 3785 (NNELMPHGVK…GAISNVVVLQ (111 aa)). The ExoN/MTase coactivator domain occupies 3787–3928 (KGHETEEVDA…CDSLRQPKPS (142 aa)). The Zn(2+) site is built by Cys-3860, Cys-3863, His-3869, Cys-3880, Cys-3906, Cys-3909, Cys-3917, and Cys-3919. Zinc fingers lie at residues 3860 to 3880 (CLYC…DGRC) and 3906 to 3919 (CTVC…GCQC). The NiRAN domain maps to 3942–4200 (YLNRVRGSSE…APERYFEYDV (259 aa)). The Nsp12 Interface domain occupies 4205–4303 (KSYDLLKYDY…MNQDNTMSFS (99 aa)). Zn(2+) is bound by residues His-4234, Cys-4240, Cys-4245, Cys-4249, and Cys-4426. In terms of domain architecture, Nsp12 RNA-dependent RNA polymerase spans 4304–4870 (KMGLSQLMQF…NMYRAPTTLQ (567 aa)). A rdRp Fingers N-ter region spans residues 4306-4519 (GLSQLMQFVG…HQKILKSIVN (214 aa)). The rdRp Palm N-ter stretch occupies residues 4520–4558 (TRNAPVVIGTTKFYGGWDNMLRNLIQGVEDPILMGWDYP). Residues 4550-4712 (PILMGWDYPK…CYNNTLAKQG (163 aa)) form the RdRp catalytic domain. Residues 4559–4617 (KCDRAMPNLLRIAASLVLARKHTNCCTWSERVYRLYNECAQVLSETVLATGGIYVKPGG) form a rdRp Fingers C-ter region. Zn(2+) contacts are provided by His-4580, Cys-4583, and Cys-4584. The interval 4618–4753 (TSSGDATTAY…EKGPHEFCSQ (136 aa)) is rdRp Palm C-ter. Residues Ser-4697, Asp-4698, and Asp-4699 contribute to the active site. Positions 4754-4870 (HTMLVEVDGE…NMYRAPTTLQ (117 aa)) are rdRp Thumb. Residues 4871–4983 (SCGVCVVCNS…DDFNQLATTN (113 aa)) form the CV ZBD domain. Zn(2+)-binding residues include Cys-4875, Cys-4878, Cys-4886, Cys-4889, Cys-4896, Cys-4899, His-4903, His-4909, Cys-4920, Cys-4925, Cys-4942, and His-4945. The (+)RNA virus helicase ATP-binding domain maps to 5127 to 5307 (MVPACFVNNI…MVCVKPDIFL (181 aa)). 5152-5159 (GPPGSGKS) serves as a coordination point for ATP. Residues 5308–5479 (AKCYRCPKEI…QGTGLFKICN (172 aa)) form the (+)RNA virus helicase C-terminal domain. In terms of domain architecture, ExoN spans 5541–5755 (MFITRDEAIR…RCLAINNAFC (215 aa)). Residues Asp-5559, Glu-5561, and Glu-5660 contribute to the active site. Residues Cys-5676, Cys-5678, Cys-5694, His-5697, His-5725, Cys-5729, and His-5732 each coordinate Zn(2+). Residues His-5736 and Asp-5741 contribute to the active site. Residue Cys-5747 participates in Zn(2+) binding. The N7-MTase domain maps to 5764 to 5991 (YPHIANEDEV…NLWKSFSALQ (228 aa)). Residue 5799 to 5805 (DIGNPKG) participates in S-adenosyl-L-methionine binding. The gpppA-binding stretch occupies residues 5879–5893 (CNGGSLYVNKHAFHT). The Zn(2+) site is built by Cys-5917, Cys-5937, Cys-5948, and His-5951. The Nsp15 N-terminal oligomerization domain occupies 5992 to 6052 (SIDNIAYNMY…SVAFELYAKR (61 aa)). One can recognise an AV-Nsp11N/CoV-Nsp15M domain in the interval 6053-6168 (NIRTLPNNRI…VYKRVNGAFV (116 aa)). The region spanning 6185-6326 (EPRSDVERDF…EDGIIKTCYP (142 aa)) is the NendoU domain. Catalysis depends on residues His-6214, His-6229, Lys-6269, Lys-6373, Asp-6457, Lys-6501, and Glu-6534. One can recognise a Nidovirus-type SAM-dependent 2'-O-MTase domain in the interval 6329–6628 (QSAWTCGYNM…NTSFTSDSFV (300 aa)).

This sequence belongs to the coronaviruses polyprotein 1ab family. As to quaternary structure, interacts with host PHB and PHB2. In terms of assembly, interacts with papain-like protease and non-structural protein 6. Monomer. Homodimer. Only the homodimer shows catalytic activity. As to quaternary structure, eight copies of nsp7 and eight copies of nsp8 assemble to form a heterohexadecamer dsRNA-encircling ring structure. In terms of assembly, eight copies of nsp7 and eight copies of nsp8 assemble to form a heterohexadecamer dsRNA-encircling ring structure. Interacts with ORF6 protein. Homodimer. As to quaternary structure, homododecamer. Interacts with proofreading exoribonuclease nsp14 and 2'-O-methyltransferase nsp16; these interactions enhance nsp14 and nsp16 enzymatic activities. In terms of assembly, interacts with host DDX1 (via C-terminus). Interacts with non-structural protein 10. Homohexamer. As to quaternary structure, interacts with non-structural protein 10. Mn(2+) serves as cofactor. The cofactor is Zn(2+). Specific enzymatic cleavages in vivo by its own proteases yield mature proteins. 3C-like proteinase nsp5 liberates nsps 6-16 from the polyprotein. Papain-like and 3C-like proteinases are autocatalytically processed. In terms of processing, N-glycosylated.

Its subcellular location is the host endoplasmic reticulum membrane. The protein resides in the host cytoplasm. It is found in the host perinuclear region. The protein localises to the host endoplasmic reticulum. It localises to the host endoplasmic reticulum-Golgi intermediate compartment. It carries out the reaction Thiol-dependent hydrolysis of ester, thioester, amide, peptide and isopeptide bonds formed by the C-terminal Gly of ubiquitin (a 76-residue protein attached to proteins as an intracellular targeting signal).. The enzyme catalyses RNA(n) + a ribonucleoside 5'-triphosphate = RNA(n+1) + diphosphate. It catalyses the reaction ATP + H2O = ADP + phosphate + H(+). The catalysed reaction is a 5'-end diphospho-ribonucleoside in mRNA + GTP + H(+) = a 5'-end (5'-triphosphoguanosine)-ribonucleoside in mRNA + diphosphate. It carries out the reaction uridylyl-uridylyl-ribonucleotide-RNA = a 3'-end uridylyl-2',3'-cyclophospho-uridine-RNA + a 5'-end dephospho-ribonucleoside-RNA. The enzyme catalyses a 5'-end (N(7)-methyl 5'-triphosphoguanosine)-ribonucleoside in mRNA + S-adenosyl-L-methionine = a 5'-end (N(7)-methyl 5'-triphosphoguanosine)-(2'-O-methyl-ribonucleoside) in mRNA + S-adenosyl-L-homocysteine + H(+). Functionally, multifunctional protein involved in the transcription and replication of viral RNAs. Contains the proteinases responsible for the cleavages of the polyprotein. Its function is as follows. May play a role in the modulation of host cell survival signaling pathway by interacting with host PHB and PHB2. Indeed, these two proteins play a role in maintaining the functional integrity of the mitochondria and protecting cells from various stresses. Responsible for the cleavages located at the N-terminus of the replicase polyprotein. In addition, PL-PRO possesses a deubiquitinating/deISGylating activity and processes both 'Lys-48'- and 'Lys-63'-linked polyubiquitin chains from cellular substrates. In terms of biological role, plays a role in host membrane rearrangement that leads to creation of cytoplasmic double-membrane vesicles (DMV) necessary for viral replication. Alone is able to induce paired membranes. Coexpression of nsp3 and nsp4 does not result in the formation of DMVs. Functionally, responsible for the majority of cleavages as it cleaves the C-terminus of replicase polyprotein at 11 sites. Recognizes substrates containing the core sequence [ILMVF]-Q-|-[SGACN]. Inhibited by the substrate-analog Cbz-Val-Asn-Ser-Thr-Leu-Gln-CMK. Its function is as follows. Forms a hexadecamer with nsp8 (8 subunits of each) that may participate in viral replication by acting as a primase. Alternatively, may synthesize substantially longer products than oligonucleotide primers. Forms a hexadecamer with nsp7 (8 subunits of each) that may participate in viral replication by acting as a primase. Alternatively, may synthesize substantially longer products than oligonucleotide primers. In terms of biological role, forms a primer, NSP9-pU, which is utilized by the polymerase for the initiation of RNA chains. Interacts with ribosome signal recognition particle RNA (SRP). Together with NSP8, suppress protein integration into the cell membrane, thereby disrupting host immune defenses. Functionally, plays a pivotal role in viral transcription by stimulating both nsp14 3'-5' exoribonuclease and nsp16 2'-O-methyltransferase activities. Therefore plays an essential role in viral mRNAs cap methylation. Its function is as follows. RNA-directed RNA polymerase that catalyzes the transcription of viral genomic and subgenomic RNAs. Acts in complex with nsp7 and nsp8 to transcribe both the minus and positive strands of genomic RNA. The kinase-like NiRAN domain of NSP12 attaches one or more nucleotides to the amino terminus of NSP9, forming a covalent RNA-protein intermediate that serves as transcription/replication primer. Subgenomic RNAs (sgRNAs) are formed by discontinuous transcription: The polymerase has the ability to pause at transcription-regulating sequences (TRS) and jump to the leader TRS, resulting in a major deletion. This creates a series of subgenomic RNAs that are replicated, transcribed and translated. In addition, Nsp12 is a subunit of the viral RNA capping enzyme that catalyzes the RNA guanylyltransferase reaction for genomic and sub-genomic RNAs. Subsequently, the NiRAN domain transfers RNA to GDP, and forms the core cap structure GpppA-RNA. Multi-functional protein with a zinc-binding domain in N-terminus displaying RNA and DNA duplex-unwinding activities with 5' to 3' polarity. Activity of helicase is dependent on magnesium. In terms of biological role, enzyme possessing two different activities: an exoribonuclease activity acting on both ssRNA and dsRNA in a 3' to 5' direction and a N7-guanine methyltransferase activity. Acts as a proofreading exoribonuclease for RNA replication, thereby lowering The sensitivity of the virus to RNA mutagens. Functionally, plays a role in viral transcription/replication and prevents the simultaneous activation of host cell dsRNA sensors, such as MDA5/IFIH1, OAS, and PKR. Acts by degrading the 5'-polyuridines generated during replication of the poly(A) region of viral genomic and subgenomic RNAs. Catalyzes a two-step reaction in which a 2'3'-cyclic phosphate (2'3'-cP) is first generated by 2'-O transesterification, which is then hydrolyzed to a 3'-phosphate (3'-P). If not degraded, poly(U) RNA would hybridize with poly(A) RNA tails and activate host dsRNA sensors. Its function is as follows. Methyltransferase that mediates mRNA cap 2'-O-ribose methylation to the 5'-cap structure of viral mRNAs. N7-methyl guanosine cap is a prerequisite for binding of nsp16. Therefore plays an essential role in viral mRNAs cap methylation which is essential to evade immune system. The sequence is that of Replicase polyprotein 1ab (rep) from Gallus gallus (Chicken).